An 827-amino-acid chain; its full sequence is NT-3 growth factor receptor (827 aa).

An N-terminal signal peptide occupies residues Met-1 to Ala-31. 2 disulfides stabilise this stretch: Cys-32–Cys-38 and Cys-36–Cys-45. Residues Cys-32 to Asp-430 lie on the Extracellular side of the membrane. N-linked (GlcNAc...) asparagine glycans are attached at residues Asn-68, Asn-72, and Asn-79. 2 LRR repeats span residues Gly-104–Lys-125 and His-128–Thr-149. The LRRCT domain maps to Asn-160–Leu-209. The N-linked (GlcNAc...) asparagine glycan is linked to Asn-163. 2 cysteine pairs are disulfide-bonded: Cys-164–Cys-189 and Cys-166–Cys-207. Asn-203, Asn-218, Asn-232, Asn-259, Asn-267, Asn-272, and Asn-294 each carry an N-linked (GlcNAc...) asparagine glycan. 2 consecutive Ig-like C2-type domains span residues Pro-210–Thr-300 and His-319–Asn-382. An intrachain disulfide couples Cys-231 to Cys-284. A disulfide bridge connects residues Cys-320 and Cys-362. Asn-375 and Asn-388 each carry an N-linked (GlcNAc...) asparagine glycan. Residues Thr-431 to Ile-455 form a helical membrane-spanning segment. Over Asn-456–Gly-827 the chain is Cytoplasmic. Tyr-518 bears the Phosphotyrosine; by autocatalysis mark. The 273-residue stretch at Ile-540–Leu-812 folds into the Protein kinase domain. ATP is bound by residues Leu-546 to Val-554 and Lys-574. The Proton acceptor role is filled by Asp-681. Tyr-707, Tyr-711, Tyr-712, and Tyr-822 each carry phosphotyrosine; by autocatalysis.

It belongs to the protein kinase superfamily. Tyr protein kinase family. Insulin receptor subfamily. In terms of assembly, exists in a dynamic equilibrium between monomeric (low affinity) and dimeric (high affinity) structures. Interacts with PTPRS. Ligand-mediated auto-phosphorylation.

It is found in the membrane. It catalyses the reaction L-tyrosyl-[protein] + ATP = O-phospho-L-tyrosyl-[protein] + ADP + H(+). Receptor tyrosine kinase involved in nervous system and probably heart development. Upon binding of its ligand NTF3/neurotrophin-3, NTRK3 autophosphorylates and activates different signaling pathways, including the phosphatidylinositol 3-kinase/AKT and the MAPK pathways, that control cell survival and differentiation. The KT and KD isoforms fail to stimulate transformation, process outgrowth or survival. Isoform KI25 exhibits tyrosine phosphorylation in the absence of ligand and is unable to mediate survival of neuronal cells. The protein is NT-3 growth factor receptor (NTRK3) of Gallus gallus (Chicken).